The sequence spans 199 residues: Superoxide dismutase [Fe] (199 aa).

Fe cation is bound by residues His-28, His-80, Asp-162, and His-166.

Belongs to the iron/manganese superoxide dismutase family. Homodimer. Fe cation is required as a cofactor.

It is found in the cytoplasm. The enzyme catalyses 2 superoxide + 2 H(+) = H2O2 + O2. Its function is as follows. Destroys superoxide anion radicals which are normally produced within the cells and which are toxic to biological systems. The protein is Superoxide dismutase [Fe] (sodB) of Leptolyngbya boryana (Plectonema boryanum).